Reading from the N-terminus, the 159-residue chain is Ecotin (159 aa).

Positions 1–22 are cleaved as a signal peptide; it reads MRPTPMTAILALSLAAAAPAMA. Cysteines 68 and 105 form a disulfide.

This sequence belongs to the protease inhibitor I11 (ecotin) family. In terms of assembly, homodimer.

It localises to the periplasm. Its function is as follows. General inhibitor of family S1 serine proteases. This Pseudomonas putida (strain ATCC 700007 / DSM 6899 / JCM 31910 / BCRC 17059 / LMG 24140 / F1) protein is Ecotin.